A 490-amino-acid polypeptide reads, in one-letter code: MSSPGDTAVLVLAAGPGTRMRSDTPKVLHTLGGRSMLSHLLHAIAKVAPQHLAVVLGHDHERIAPLIADWADDLGRPIDVALQERPRGTGDAVRCGLSALPDDYAGVLVVTSGDTPLLDADTVADLIAGHTATRAAVTVLTTTLSDPSGYGRILRTQDNEVTAIVEHADATESQREIREVNAGVYAFDTAALRSALNRLSADNAQQELYLTDVIAILRGDGLPIRARHVDDSALVAGVNNRVQLAQLGAELNRRIVAAHQLAGVTVVDPATTWIDVDVTIGRDTVIHPGTQLLGRTQIGGHCVVGPDTTLTDVSVGDGASVVRTHGTGSSVGAGATVGPFAYLRPGTVLGDDGKLGAFVETKNATIGTGTKVPHLTYVGDADIGEHSNIGASSVFVNYDGESKRRTTVGSHVRTGSDTMFVAPVTVGDGAYTGAGTVVREDVPPGALAVSAGPQRNIEGWVRRKRPGSAAARAAEAAEKAAGGRPAGEAE.

The tract at residues 1-241 is pyrophosphorylase; that stretch reads MSSPGDTAVL…SALVAGVNNR (241 aa). UDP-N-acetyl-alpha-D-glucosamine contacts are provided by residues 12-15, Lys26, Gln83, 88-89, 112-114, Gly151, Glu166, Asn181, and Asn239; these read LAAG, GT, and SGD. Asp114 is a Mg(2+) binding site. Residue Asn239 participates in Mg(2+) binding. The interval 242-262 is linker; the sequence is VQLAQLGAELNRRIVAAHQLA. The interval 263–490 is N-acetyltransferase; sequence GVTVVDPATT…AGGRPAGEAE (228 aa). UDP-N-acetyl-alpha-D-glucosamine is bound by residues Arg344 and Lys362. His374 functions as the Proton acceptor in the catalytic mechanism. Tyr377 and Asn388 together coordinate UDP-N-acetyl-alpha-D-glucosamine. Residues Ala391, 397–398, Ser416, and Ala434 each bind acetyl-CoA; that span reads NY. The interval 462-490 is disordered; that stretch reads RRKRPGSAAARAAEAAEKAAGGRPAGEAE. The span at 467–490 shows a compositional bias: low complexity; the sequence is GSAAARAAEAAEKAAGGRPAGEAE.

This sequence in the N-terminal section; belongs to the N-acetylglucosamine-1-phosphate uridyltransferase family. In the C-terminal section; belongs to the transferase hexapeptide repeat family. As to quaternary structure, homotrimer. The cofactor is Mg(2+).

It localises to the cytoplasm. It carries out the reaction alpha-D-glucosamine 1-phosphate + acetyl-CoA = N-acetyl-alpha-D-glucosamine 1-phosphate + CoA + H(+). The enzyme catalyses N-acetyl-alpha-D-glucosamine 1-phosphate + UTP + H(+) = UDP-N-acetyl-alpha-D-glucosamine + diphosphate. Its pathway is nucleotide-sugar biosynthesis; UDP-N-acetyl-alpha-D-glucosamine biosynthesis; N-acetyl-alpha-D-glucosamine 1-phosphate from alpha-D-glucosamine 6-phosphate (route II): step 2/2. It functions in the pathway nucleotide-sugar biosynthesis; UDP-N-acetyl-alpha-D-glucosamine biosynthesis; UDP-N-acetyl-alpha-D-glucosamine from N-acetyl-alpha-D-glucosamine 1-phosphate: step 1/1. The protein operates within bacterial outer membrane biogenesis; LPS lipid A biosynthesis. In terms of biological role, catalyzes the last two sequential reactions in the de novo biosynthetic pathway for UDP-N-acetylglucosamine (UDP-GlcNAc). The C-terminal domain catalyzes the transfer of acetyl group from acetyl coenzyme A to glucosamine-1-phosphate (GlcN-1-P) to produce N-acetylglucosamine-1-phosphate (GlcNAc-1-P), which is converted into UDP-GlcNAc by the transfer of uridine 5-monophosphate (from uridine 5-triphosphate), a reaction catalyzed by the N-terminal domain. In Mycobacterium avium (strain 104), this protein is Bifunctional protein GlmU.